We begin with the raw amino-acid sequence, 249 residues long: Cytochrome c oxidase subunit 2 (249 aa).

Positions 1 to 13 are cleaved as a signal peptide; it reads MLNLFQIMNMINN. Topologically, residues 14 to 40 are mitochondrial intermembrane; the sequence is DVPTPYGFYFQDSATPNQEGILELHDN. A helical transmembrane segment spans residues 41–62; that stretch reads IMFYLVVILGLVSWMLFTIVRT. The Mitochondrial matrix portion of the chain corresponds to 63–80; the sequence is YSRNPMAYKYIKHGQTIE. A helical membrane pass occupies residues 81-105; that stretch reads IIWKIFPAVILLTIAFPSFILLYLC. The Mitochondrial intermembrane portion of the chain corresponds to 106 to 249; the sequence is DEVISPAMTI…PKFLEWLNEQ (144 aa). Residues histidine 184, cysteine 219, glutamate 221, cysteine 223, histidine 227, and methionine 230 each coordinate Cu cation. Glutamate 221 provides a ligand contact to Mg(2+).

This sequence belongs to the cytochrome c oxidase subunit 2 family. Component of the cytochrome c oxidase (complex IV, CIV), a multisubunit enzyme composed of a catalytic core of 3 subunits and several supernumerary subunits. The complex exists as a monomer or a dimer and forms supercomplexes (SCs) in the inner mitochondrial membrane with ubiquinol-cytochrome c oxidoreductase (cytochrome b-c1 complex, complex III, CIII). The cofactor is Cu cation. Post-translationally, the signal sequence of COX2 is processed by IMP1.

It is found in the mitochondrion inner membrane. The enzyme catalyses 4 Fe(II)-[cytochrome c] + O2 + 8 H(+)(in) = 4 Fe(III)-[cytochrome c] + 2 H2O + 4 H(+)(out). Functionally, component of the cytochrome c oxidase, the last enzyme in the mitochondrial electron transport chain which drives oxidative phosphorylation. The respiratory chain contains 3 multisubunit complexes succinate dehydrogenase (complex II, CII), ubiquinol-cytochrome c oxidoreductase (cytochrome b-c1 complex, complex III, CIII) and cytochrome c oxidase (complex IV, CIV), that cooperate to transfer electrons derived from NADH and succinate to molecular oxygen, creating an electrochemical gradient over the inner membrane that drives transmembrane transport and the ATP synthase. Cytochrome c oxidase is the component of the respiratory chain that catalyzes the reduction of oxygen to water. Electrons originating from reduced cytochrome c in the intermembrane space (IMS) are transferred via the dinuclear copper A center (CU(A)) of subunit 2 and heme A of subunit 1 to the active site in subunit 1, a binuclear center (BNC) formed by heme A3 and copper B (CU(B)). The BNC reduces molecular oxygen to 2 water molecules using 4 electrons from cytochrome c in the IMS and 4 protons from the mitochondrial matrix. The polypeptide is Cytochrome c oxidase subunit 2 (COX2) (Maudiozyma exigua (Yeast)).